The sequence spans 156 residues: SsrA-binding protein (156 aa).

The protein belongs to the SmpB family.

The protein localises to the cytoplasm. Functionally, required for rescue of stalled ribosomes mediated by trans-translation. Binds to transfer-messenger RNA (tmRNA), required for stable association of tmRNA with ribosomes. tmRNA and SmpB together mimic tRNA shape, replacing the anticodon stem-loop with SmpB. tmRNA is encoded by the ssrA gene; the 2 termini fold to resemble tRNA(Ala) and it encodes a 'tag peptide', a short internal open reading frame. During trans-translation Ala-aminoacylated tmRNA acts like a tRNA, entering the A-site of stalled ribosomes, displacing the stalled mRNA. The ribosome then switches to translate the ORF on the tmRNA; the nascent peptide is terminated with the 'tag peptide' encoded by the tmRNA and targeted for degradation. The ribosome is freed to recommence translation, which seems to be the essential function of trans-translation. Required for trans-translation. Probably required for sporulation; deletion of the gene for tmRNA impairs sporulation via its effect on trans-translation, and as smpB is required for trans-translation under non-stress conditions, it is also probably required during sporulation. This chain is SsrA-binding protein, found in Bacillus subtilis (strain 168).